The following is a 385-amino-acid chain: Polyketide synthase 2 (385 aa).

The active site involves cysteine 157.

It belongs to the thiolase-like superfamily. Chalcone/stilbene synthases family. As to expression, expressed in leaves and glandular trichomes.

It is found in the cytoplasm. Its function is as follows. Polyketide synthase responsible for the biosynthesis of secondary metabolites. The polypeptide is Polyketide synthase 2 (PKSG2) (Cannabis sativa (Hemp)).